Here is a 366-residue protein sequence, read N- to C-terminus: 3-beta-hydroxysteroid dehydrogenase (366 aa).

Residue Tyr-154 is the Proton donor of the active site.

The protein belongs to the 3-beta-HSD family.

It catalyses the reaction testosterone + NAD(+) = androst-4-ene-3,17-dione + NADH + H(+). The catalysed reaction is testosterone + NADP(+) = androst-4-ene-3,17-dione + NADPH + H(+). Its function is as follows. Catalyzes the degradation of testosterone into androstenedione. This is 3-beta-hydroxysteroid dehydrogenase from Mycolicibacterium neoaurum (Mycobacterium neoaurum).